The following is a 252-amino-acid chain: Pyrroloquinoline-quinone synthase (252 aa).

The protein belongs to the PqqC family.

The catalysed reaction is 6-(2-amino-2-carboxyethyl)-7,8-dioxo-1,2,3,4,7,8-hexahydroquinoline-2,4-dicarboxylate + 3 O2 = pyrroloquinoline quinone + 2 H2O2 + 2 H2O + H(+). It participates in cofactor biosynthesis; pyrroloquinoline quinone biosynthesis. In terms of biological role, ring cyclization and eight-electron oxidation of 3a-(2-amino-2-carboxyethyl)-4,5-dioxo-4,5,6,7,8,9-hexahydroquinoline-7,9-dicarboxylic-acid to PQQ. In Acinetobacter baumannii (strain ACICU), this protein is Pyrroloquinoline-quinone synthase.